A 374-amino-acid polypeptide reads, in one-letter code: Copper-containing nitrite reductase (374 aa).

A signal peptide (tat-type signal) is located at residues 1–31 (MFTRRAALVGAAALASAPLVIRTAGAEEAPA). 2 Plastocyanin-like domains span residues 93–189 (MTFD…IMVL) and 254–355 (GAVG…VLVE). Residues His-126, His-131, His-166, Cys-167, His-177, Met-182, and His-338 each contribute to the Cu cation site.

The protein belongs to the multicopper oxidase family. Homotrimer. It depends on Cu(2+) as a cofactor. The cofactor is Cu(+). Requires FAD as cofactor. In terms of processing, predicted to be exported by the Tat system. The position of the signal peptide cleavage has not been experimentally proven.

It localises to the periplasm. The catalysed reaction is nitric oxide + Fe(III)-[cytochrome c] + H2O = Fe(II)-[cytochrome c] + nitrite + 2 H(+). It functions in the pathway nitrogen metabolism; nitrate reduction (denitrification); dinitrogen from nitrate: step 2/4. This chain is Copper-containing nitrite reductase (nirK), found in Cereibacter sphaeroides (strain ATCC 17025 / ATH 2.4.3) (Rhodobacter sphaeroides).